Consider the following 320-residue polypeptide: Malate dehydrogenase (320 aa).

NAD(+) is bound by residues 10–15 (GSGMIG) and Asp34. Arg83 and Arg89 together coordinate substrate. Residues Asn96 and 119–121 (ITN) each bind NAD(+). 2 residues coordinate substrate: Asn121 and Arg152. His176 acts as the Proton acceptor in catalysis.

This sequence belongs to the LDH/MDH superfamily. MDH type 3 family.

It carries out the reaction (S)-malate + NAD(+) = oxaloacetate + NADH + H(+). Its function is as follows. Catalyzes the reversible oxidation of malate to oxaloacetate. The chain is Malate dehydrogenase from Rhizobium meliloti (strain 1021) (Ensifer meliloti).